Reading from the N-terminus, the 688-residue chain is Sodium channel and clathrin linker 1 (688 aa).

The residue at position 2 (Ala2) is an N-acetylalanine. Positions 69–673 (ELNGQLKYYQ…SASQQLSVIT (605 aa)) form a coiled coil. Ser681 is modified (phosphoserine).

In terms of assembly, interacts with SCN10A and clathrin. Identified in a complex containing SCN10A, clathrin and SCLT1.

The protein resides in the cytoplasm. The protein localises to the cytoskeleton. It localises to the microtubule organizing center. It is found in the centrosome. Its subcellular location is the centriole. Its function is as follows. Adapter protein that links SCN10A to clathrin. Regulates SCN10A channel activity, possibly by promoting channel internalization. The polypeptide is Sodium channel and clathrin linker 1 (SCLT1) (Homo sapiens (Human)).